The following is a 55-amino-acid chain: Large ribosomal subunit protein bL33 (55 aa).

Belongs to the bacterial ribosomal protein bL33 family.

The protein is Large ribosomal subunit protein bL33 of Methylocella silvestris (strain DSM 15510 / CIP 108128 / LMG 27833 / NCIMB 13906 / BL2).